The sequence spans 447 residues: UDP-glucosyl transferase 79T1 (447 aa).

The active-site Proton acceptor is His-18. The active-site Charge relay is Asp-116. Residues Ser-265, Trp-323, Val-324, His-341, Thr-346, and Glu-349 each contribute to the UDP site.

It belongs to the UDP-glycosyltransferase family. As to expression, mainly expressed in flowers, flower buds and young leaves, and, to a lesser extent, in old leaves, stems and roots.

The protein operates within secondary metabolite biosynthesis; terpenoid biosynthesis. Component of the oleanane-type triterpene saponins (e.g. saponarioside A and saponarioside B) biosynthetic pathway, leading to the production of natural products with detergent properties used as traditional sources of soap. A glycosyltransferase that mediates the conversion of QA-triF to QA-triFR via the elongation of the C-28 sugar chain with a deoxyhexose on the D-fucose moiety. The chain is UDP-glucosyl transferase 79T1 from Saponaria officinalis (Common soapwort).